The primary structure comprises 791 residues: Ataxin-2 homolog (791 aa).

Positions 1-22 are enriched in polar residues; it reads MATRSVSMKQTSQRAASPNKTQ. 8 disordered regions span residues 1-28, 60-100, 112-134, 235-311, 326-423, 452-505, 613-634, and 707-791; these read MATR…KKWS, RGGV…QQRV, RTET…GVPL, TRSN…KEGQ, SLDS…TKLG, KPAP…PVSS, NPSQ…GNSS, and PMYG…EAKP. Residues 76–96 are compositionally biased toward low complexity; sequence SLASSEENVSSVSGSAKSNNS. Basic and acidic residues-rich tracts occupy residues 112–125 and 243–256; these read RTET…RWMP and NNKD…EAPH. Positions 326–337 are enriched in polar residues; that stretch reads SLDSKQPSSTKS. 2 stretches are compositionally biased toward basic and acidic residues: residues 360–371 and 395–418; these read DSKEPRKEEAEK and SKEE…KETT. A compositionally biased stretch (low complexity) spans 473–486; it reads SIPSTTPQSPSVVS. Residues 487–497 show a composition bias toward polar residues; sequence NGENKPSSSPV. Composition is skewed to low complexity over residues 715 to 725 and 734 to 760; these read SNSQRSFNSSN and NNNA…NTTA. Basic and acidic residues predominate over residues 774–791; that stretch reads DATEKTEKDASANQEAKP.

It belongs to the ataxin-2 family. In terms of assembly, interacts with mkt1.

It is found in the cytoplasm. Involved in post-transcriptional regulation of gene expression, probably by association with mkt1. The protein is Ataxin-2 homolog of Schizosaccharomyces pombe (strain 972 / ATCC 24843) (Fission yeast).